The following is a 224-amino-acid chain: E3 ubiquitin-protein ligase TRIM48 (224 aa).

An RING-type zinc finger spans residues 31–72; that stretch reads CPICMNYFIDPVTIDCGHSFCRPCFYLNWQDIPILTQCFECI. The B box-type zinc finger occupies 104–145; that stretch reads SEEQMCGIHRETKKMFCEVDRSLLCLLCSSSQEHRYHRHCPA. Zn(2+)-binding residues include Cys-109, His-112, Cys-131, and His-137.

The protein belongs to the TRIM/RBCC family. Interacts with PRMT1; the interaction leads to ubiquitination of PRMT1 by TRIM48. Interacts with MAP3K5. Interacts with STRAP.

The protein localises to the cytoplasm. It is found in the cytosol. The catalysed reaction is S-ubiquitinyl-[E2 ubiquitin-conjugating enzyme]-L-cysteine + [acceptor protein]-L-lysine = [E2 ubiquitin-conjugating enzyme]-L-cysteine + N(6)-ubiquitinyl-[acceptor protein]-L-lysine.. E3 ubiquitin-protein ligase which promotes K48-linked polyubiquitination of protein methyltransferase PRMT1, leading to PRMT1 degradation. This suppresses methylation of the PRMT1 substrate MAP3K5/ASK1, promoting its activation and increasing MAP3K5-dependent cell death induced by oxidative stress. TRIM48-mediated ubiquitination of PRMT1 also suppresses methylation of FOXO1 by PRMT1, leading to inhibition of FOXO1 transcriptional activity. This is E3 ubiquitin-protein ligase TRIM48 from Homo sapiens (Human).